The following is a 488-amino-acid chain: Ribosomal RNA small subunit methyltransferase F (488 aa).

Residues 135–141 (ASAPGSK), Glu-159, Asp-186, and Asp-204 contribute to the S-adenosyl-L-methionine site. Cys-257 (nucleophile) is an active-site residue.

This sequence belongs to the class I-like SAM-binding methyltransferase superfamily. RsmB/NOP family.

The protein resides in the cytoplasm. It carries out the reaction cytidine(1407) in 16S rRNA + S-adenosyl-L-methionine = 5-methylcytidine(1407) in 16S rRNA + S-adenosyl-L-homocysteine + H(+). Its function is as follows. Specifically methylates the cytosine at position 1407 (m5C1407) of 16S rRNA. This chain is Ribosomal RNA small subunit methyltransferase F, found in Shewanella pealeana (strain ATCC 700345 / ANG-SQ1).